A 490-amino-acid polypeptide reads, in one-letter code: tRNA-guanine(15) transglycosylase (490 aa).

Catalysis depends on D92, which acts as the Nucleophile. D127 and A195 together coordinate substrate. C278, C280, and C283 together coordinate Zn(2+).

Belongs to the archaeosine tRNA-ribosyltransferase family. The cofactor is Zn(2+).

The enzyme catalyses guanosine(15) in tRNA + 7-cyano-7-deazaguanine = 7-cyano-7-carbaguanosine(15) in tRNA + guanine. Its pathway is tRNA modification; archaeosine-tRNA biosynthesis. Its function is as follows. Exchanges the guanine residue with 7-cyano-7-deazaguanine (preQ0) at position 15 in the dihydrouridine loop (D-loop) of archaeal tRNAs. The sequence is that of tRNA-guanine(15) transglycosylase from Haloarcula marismortui (strain ATCC 43049 / DSM 3752 / JCM 8966 / VKM B-1809) (Halobacterium marismortui).